Here is a 101-residue protein sequence, read N- to C-terminus: UPF0235 protein Mevan_0378 (101 aa).

Belongs to the UPF0235 family.

The sequence is that of UPF0235 protein Mevan_0378 from Methanococcus vannielii (strain ATCC 35089 / DSM 1224 / JCM 13029 / OCM 148 / SB).